A 900-amino-acid polypeptide reads, in one-letter code: Zinc finger protein 62 homolog (900 aa).

The disordered stretch occupies residues 1-97; sequence MSHLKTSTED…EASEKSLHLS (97 aa). Residue Lys-5 forms a Glycyl lysine isopeptide (Lys-Gly) (interchain with G-Cter in SUMO2) linkage. The segment covering 9–18 has biased composition (acidic residues); sequence EDEEPTEEYE. The segment covering 47–73 has biased composition (basic and acidic residues); sequence SKVENQQKKPVENRMKEDKSSIREAIS. Glycyl lysine isopeptide (Lys-Gly) (interchain with G-Cter in SUMO2) cross-links involve residues Lys-48, Lys-62, Lys-65, Lys-82, and Lys-92. The segment covering 83-94 has biased composition (basic and acidic residues); sequence TEQEGEASEKSL. 13 consecutive C2H2-type zinc fingers follow at residues 225-247, 253-275, 281-303, 309-331, 337-359, 365-387, 393-415, 421-443, 449-471, 477-499, 505-527, 533-555, and 561-583; these read CKCD…KRIH, YECG…KRIH, YECD…KRIH, YECD…KSIH, YKCD…KVIH, YKCD…KSIH, HECK…RTIH, YVCD…RRLH, YKCD…KGIH, YKCS…KRIH, FGCD…KRIH, and YKCE…KSVH. Residue Lys-587 forms a Glycyl lysine isopeptide (Lys-Gly) (interchain with G-Cter in SUMO2) linkage. 10 C2H2-type zinc fingers span residues 589 to 611, 617 to 639, 645 to 667, 673 to 695, 701 to 723, 729 to 751, 757 to 779, 785 to 807, 813 to 834, and 840 to 862; these read FKCD…KKVH, YKCD…RRVH, YECD…KRIH, YECD…KSTH, HTCD…KRVH, FKCV…KRIH, YVCD…KRIH, YECD…KSVH, YNCE…KRIH, and YRCN…KRTH. Lys-748 participates in a covalent cross-link: Glycyl lysine isopeptide (Lys-Gly) (interchain with G-Cter in SUMO2). Lys-882 participates in a covalent cross-link: Glycyl lysine isopeptide (Lys-Gly) (interchain with G-Cter in SUMO2).

The protein belongs to the krueppel C2H2-type zinc-finger protein family.

It is found in the nucleus. In terms of biological role, may play a role in differentiating skeletal muscle. The chain is Zinc finger protein 62 homolog (ZFP62) from Homo sapiens (Human).